The primary structure comprises 486 residues: Glutamate--tRNA ligase (486 aa).

Residues 12 to 22 (PSPTGTPHVGL) carry the 'HIGH' region motif. The 'KMSKS' region signature appears at 256–260 (KLSKR). ATP is bound at residue Lys259.

Belongs to the class-I aminoacyl-tRNA synthetase family. Glutamate--tRNA ligase type 1 subfamily. In terms of assembly, monomer.

The protein resides in the cytoplasm. The catalysed reaction is tRNA(Glu) + L-glutamate + ATP = L-glutamyl-tRNA(Glu) + AMP + diphosphate. Catalyzes the attachment of glutamate to tRNA(Glu) in a two-step reaction: glutamate is first activated by ATP to form Glu-AMP and then transferred to the acceptor end of tRNA(Glu). This chain is Glutamate--tRNA ligase, found in Mycolicibacterium smegmatis (strain ATCC 700084 / mc(2)155) (Mycobacterium smegmatis).